The sequence spans 208 residues: Uracil phosphoribosyltransferase (208 aa).

5-phospho-alpha-D-ribose 1-diphosphate is bound by residues Arg78, Arg103, and 130-138 (DPMLATGGS). Residues Ile193 and 198 to 200 (GDA) contribute to the uracil site. 5-phospho-alpha-D-ribose 1-diphosphate is bound at residue Asp199.

Belongs to the UPRTase family. Requires Mg(2+) as cofactor.

The enzyme catalyses UMP + diphosphate = 5-phospho-alpha-D-ribose 1-diphosphate + uracil. It functions in the pathway pyrimidine metabolism; UMP biosynthesis via salvage pathway; UMP from uracil: step 1/1. Allosterically activated by GTP. In terms of biological role, catalyzes the conversion of uracil and 5-phospho-alpha-D-ribose 1-diphosphate (PRPP) to UMP and diphosphate. The polypeptide is Uracil phosphoribosyltransferase (Roseiflexus castenholzii (strain DSM 13941 / HLO8)).